We begin with the raw amino-acid sequence, 549 residues long: Arginine--tRNA ligase (549 aa).

The 'HIGH' region signature appears at 122–132 (ANPTGFLHLGH).

The protein belongs to the class-I aminoacyl-tRNA synthetase family. In terms of assembly, monomer.

The protein resides in the cytoplasm. It carries out the reaction tRNA(Arg) + L-arginine + ATP = L-arginyl-tRNA(Arg) + AMP + diphosphate. The protein is Arginine--tRNA ligase of Mycoplasmoides gallisepticum (strain R(low / passage 15 / clone 2)) (Mycoplasma gallisepticum).